The chain runs to 160 residues: uncharacterized protein (160 aa).

The chain crosses the membrane as a helical span at residues 1–21; sequence MSIQTLIIISIVIFILWLTFT.

Belongs to the IIV-6 203L/325L family.

The protein resides in the membrane. This is an uncharacterized protein from Invertebrate iridescent virus 6 (IIV-6).